Here is a 450-residue protein sequence, read N- to C-terminus: uncharacterized protein (450 aa).

The TRAM domain occupies 1-58 (MQKNQIVDLEITDLSYEAMGVAHLDGMTVFVNNALPGEIVSAKLLKVKKNFAFAKIEK). S-adenosyl-L-methionine is bound by residues glutamine 280, tyrosine 309, glutamate 330, and aspartate 378. Catalysis depends on cysteine 405, which acts as the Nucleophile.

Belongs to the class I-like SAM-binding methyltransferase superfamily. RNA M5U methyltransferase family.

This is an uncharacterized protein from Lactobacillus johnsonii (strain CNCM I-12250 / La1 / NCC 533).